Reading from the N-terminus, the 498-residue chain is Type II secretion system protein E (498 aa).

Residue 261-268 (GPTGSGKS) coordinates ATP. Zn(2+) is bound by residues C394, C397, C425, and C428.

Belongs to the GSP E family. In terms of assembly, forms homooligomers; most probably hexamers. Interacts with OutL/GspL. It depends on Zn(2+) as a cofactor.

It localises to the cell inner membrane. It carries out the reaction ATP + H2O + cellular proteinSide 1 = ADP + phosphate + cellular proteinSide 2.. In terms of biological role, ATPase component of the type II secretion system required for the energy-dependent secretion of extracellular factors such as proteases and toxins from the periplasm. Acts as a molecular motor to provide the energy that is required for assembly of the pseudopilus and the extrusion of substrates generated in the cytoplasm. The chain is Type II secretion system protein E (outE) from Pectobacterium carotovorum subsp. carotovorum (Erwinia carotovora subsp. carotovora).